Consider the following 1795-residue polypeptide: Protein TIC 214 (1795 aa).

The next 6 helical transmembrane spans lie at 19-39 (IINSVVVVGLYYGFLTTFSIG), 68-88 (FIAGQLMMFISIYYAPLHLAL), 91-111 (PHTITVLALPYLLFHFFWNNH), 133-153 (VFLNNLIFQLFNHFILPSSML), 176-196 (VGWLIGHILFMKWVGLVLVWI), and 227-247 (IFSILLFITCVYYLGRIPSPI). The interval 1490–1517 (EKESTGQVEFESDKEQQRNSESALSNQE) is disordered. Residues 1508–1517 (NSESALSNQE) are compositionally biased toward polar residues.

It belongs to the TIC214 family. Part of the Tic complex.

It localises to the plastid. The protein resides in the chloroplast inner membrane. Involved in protein precursor import into chloroplasts. May be part of an intermediate translocation complex acting as a protein-conducting channel at the inner envelope. The polypeptide is Protein TIC 214 (Crucihimalaya wallichii (Rock-cress)).